We begin with the raw amino-acid sequence, 292 residues long: Histamine N-methyltransferase (292 aa).

Glu-28 contributes to the substrate binding site. The S-adenosyl-L-methionine site is built by Gly-60, Glu-89, Gln-94, Ser-120, and Ile-142. Substrate is bound at residue Asn-283.

It belongs to the class I-like SAM-binding methyltransferase superfamily. HNMT family. In terms of assembly, monomer.

The protein resides in the cytoplasm. It carries out the reaction histamine + S-adenosyl-L-methionine = N(tau)-methylhistamine + S-adenosyl-L-homocysteine + H(+). Its function is as follows. Inactivates histamine by N-methylation. Plays an important role in degrading histamine and in regulating the airway response to histamine. In Homo sapiens (Human), this protein is Histamine N-methyltransferase (HNMT).